Reading from the N-terminus, the 253-residue chain is LexA repressor (253 aa).

The interval 1–34 is disordered; the sequence is MAIEKKPAGARGSRGSRTVKTLPNGKPDPASLSD. The H-T-H motif DNA-binding region spans 56-76; sequence IREIGDAAGLQSTSSVAYQLK. A compositionally biased stretch (basic and acidic residues) spans 82–106; that stretch reads GFLRRDPNKPRAVDVRHLPETESRS. The segment at 82–127 is disordered; it reads GFLRRDPNKPRAVDVRHLPETESRSSKAATQAKSKAPQAGAHDPEL. A compositionally biased stretch (low complexity) spans 107–120; sequence SKAATQAKSKAPQA. Residues S177 and K214 each act as for autocatalytic cleavage activity in the active site.

It belongs to the peptidase S24 family. As to quaternary structure, homodimer.

It catalyses the reaction Hydrolysis of Ala-|-Gly bond in repressor LexA.. Its function is as follows. Represses a number of genes involved in the response to DNA damage (SOS response), including recA and lexA. In the presence of single-stranded DNA, RecA interacts with LexA causing an autocatalytic cleavage which disrupts the DNA-binding part of LexA, leading to derepression of the SOS regulon and eventually DNA repair. This is LexA repressor from Corynebacterium glutamicum (strain R).